Reading from the N-terminus, the 149-residue chain is Nucleoside diphosphate kinase (149 aa).

6 residues coordinate ATP: K9, F57, R85, T91, R102, and N112. H115 functions as the Pros-phosphohistidine intermediate in the catalytic mechanism.

This sequence belongs to the NDK family. In terms of assembly, homotetramer. The cofactor is Mg(2+).

Its subcellular location is the cytoplasm. The catalysed reaction is a 2'-deoxyribonucleoside 5'-diphosphate + ATP = a 2'-deoxyribonucleoside 5'-triphosphate + ADP. The enzyme catalyses a ribonucleoside 5'-diphosphate + ATP = a ribonucleoside 5'-triphosphate + ADP. Its function is as follows. Major role in the synthesis of nucleoside triphosphates other than ATP. The ATP gamma phosphate is transferred to the NDP beta phosphate via a ping-pong mechanism, using a phosphorylated active-site intermediate. This is Nucleoside diphosphate kinase from Nostoc punctiforme (strain ATCC 29133 / PCC 73102).